Reading from the N-terminus, the 200-residue chain is UPF0316 protein Mhun_0543 (200 aa).

The next 3 helical transmembrane spans lie at 3–23, 44–64, and 71–91; these read VGFL…IFLA, FIAP…IGQV, and PICY…GMEL.

This sequence belongs to the UPF0316 family.

It localises to the cell membrane. The polypeptide is UPF0316 protein Mhun_0543 (Methanospirillum hungatei JF-1 (strain ATCC 27890 / DSM 864 / NBRC 100397 / JF-1)).